The following is a 281-amino-acid chain: Bifunctional protein FolD (281 aa).

NADP(+) contacts are provided by residues G165–G167, T192, and V233.

The protein belongs to the tetrahydrofolate dehydrogenase/cyclohydrolase family. In terms of assembly, homodimer.

The enzyme catalyses (6R)-5,10-methylene-5,6,7,8-tetrahydrofolate + NADP(+) = (6R)-5,10-methenyltetrahydrofolate + NADPH. It carries out the reaction (6R)-5,10-methenyltetrahydrofolate + H2O = (6R)-10-formyltetrahydrofolate + H(+). The protein operates within one-carbon metabolism; tetrahydrofolate interconversion. Functionally, catalyzes the oxidation of 5,10-methylenetetrahydrofolate to 5,10-methenyltetrahydrofolate and then the hydrolysis of 5,10-methenyltetrahydrofolate to 10-formyltetrahydrofolate. This Mycobacterium marinum (strain ATCC BAA-535 / M) protein is Bifunctional protein FolD.